The sequence spans 884 residues: Receptor-like protein 39 (884 aa).

The N-terminal stretch at 1–24 (MSELLFRLNFLLLLLLSCVSLASS) is a signal peptide. Topologically, residues 25 to 847 (FFSFNDPVVG…EEEEQVLNWK (823 aa)) are extracellular. Residues Asn59, Asn71, and Asn92 are each glycosylated (N-linked (GlcNAc...) asparagine). LRR repeat units follow at residues 98–122 (FHQL…EFGM), 124–146 (NKLE…SFSN), 147–170 (LSML…VRNL), 171–196 (RKLT…LFEL), 197–223 (HNLA…NLNK), 225–245 (ELLD…ISNL), 246–268 (TQLT…VQNL), 269–292 (TKLS…LFTM), 294–318 (FLSY…SLSS), and 320–344 (LENL…LINL). Asn146 carries N-linked (GlcNAc...) asparagine glycosylation. Asn190, Asn208, Asn244, and Asn267 each carry an N-linked (GlcNAc...) asparagine glycan. 2 N-linked (GlcNAc...) asparagine glycosylation sites follow: Asn304 and Asn313. One copy of the LRR 11; degenerate repeat lies at 345 to 365 (KELHLSFLNTSYPINLKLFSS). N-linked (GlcNAc...) asparagine glycosylation is present at Asn353. 5 LRR repeats span residues 366–391 (LKYL…SYIP), 392–413 (STLE…ILKT), 414–438 (LPNL…LWSL), 440–463 (RLSS…ILVN), and 464–487 (SSVR…PLSV). A glycan (N-linked (GlcNAc...) asparagine) is linked at Asn403. Asn463 is a glycosylation site (N-linked (GlcNAc...) asparagine). An LRR 17; degenerate repeat occupies 488 to 507 (NYFSARNNRYGGDIPLSICS). LRR repeat units follow at residues 508-529 (RRSL…PPCP), 530-553 (SNFL…YYAD), 554-577 (APLR…LLNC), 579-601 (ALQF…LKAL), 602-625 (PKLQ…NQGS), 628-652 (FPEL…FFEN), 702-725 (SSSA…IGLL), 726-749 (KALI…LANL), 750-773 (KKIE…IGTL), and 775-798 (FLAY…QITG). Asn520 is a glycosylation site (N-linked (GlcNAc...) asparagine). Residue Asn576 is glycosylated (N-linked (GlcNAc...) asparagine). Asn732 carries N-linked (GlcNAc...) asparagine glycosylation. An N-linked (GlcNAc...) asparagine glycan is attached at Asn780. A helical transmembrane segment spans residues 848–868 (GVGIGYGVGVLLGLAIAQLIA). At 869-884 (SYKPEWLVFLFQSRNH) the chain is on the cytoplasmic side.

This sequence belongs to the RLP family.

Its subcellular location is the cell membrane. The polypeptide is Receptor-like protein 39 (Arabidopsis thaliana (Mouse-ear cress)).